Reading from the N-terminus, the 101-residue chain is Small ribosomal subunit protein uS14 (101 aa).

This sequence belongs to the universal ribosomal protein uS14 family. Part of the 30S ribosomal subunit. Contacts proteins S3 and S10.

Binds 16S rRNA, required for the assembly of 30S particles and may also be responsible for determining the conformation of the 16S rRNA at the A site. In Actinobacillus succinogenes (strain ATCC 55618 / DSM 22257 / CCUG 43843 / 130Z), this protein is Small ribosomal subunit protein uS14.